Reading from the N-terminus, the 803-residue chain is Bifunctional enzyme MurC/Ddl (803 aa).

The segment at 1–446 (MMKSLFYHFI…GEKLRDFEPQ (446 aa)) is UDP-N-acetylmuramate--alanine ligase. Residues 111–117 (GSHGKTT) and 600–655 (VEAF…CKEI) each bind ATP. The segment at 447–803 (KLHLGIICGG…SFVDQAFAIQ (357 aa)) is D-alanine--D-alanine ligase. An ATP-grasp domain is found at 567–778 (KRFMSDLGIP…YEQIVHQLVI (212 aa)). Residues D732, E745, and N747 each contribute to the Mg(2+) site.

It in the N-terminal section; belongs to the MurCDEF family. The protein in the C-terminal section; belongs to the D-alanine--D-alanine ligase family. It depends on Mg(2+) as a cofactor. The cofactor is Mn(2+).

Its subcellular location is the cytoplasm. It catalyses the reaction UDP-N-acetyl-alpha-D-muramate + L-alanine + ATP = UDP-N-acetyl-alpha-D-muramoyl-L-alanine + ADP + phosphate + H(+). The catalysed reaction is 2 D-alanine + ATP = D-alanyl-D-alanine + ADP + phosphate + H(+). The protein operates within cell wall biogenesis; peptidoglycan biosynthesis. Its function is as follows. Cell wall formation. The protein is Bifunctional enzyme MurC/Ddl (murC/ddl) of Chlamydia trachomatis serovar D (strain ATCC VR-885 / DSM 19411 / UW-3/Cx).